Reading from the N-terminus, the 213-residue chain is Maleylacetoacetate isomerase (213 aa).

The GST N-terminal domain occupies 3 to 84; it reads NETVLYDYWR…YLAETRDGTG (82 aa). The GST C-terminal domain maps to 89–213; the sequence is HPIDRQRVRA…QRAHPDRAKP (125 aa).

It belongs to the GST superfamily. Zeta family.

It carries out the reaction 4-maleylacetoacetate = 4-fumarylacetoacetate. The protein operates within amino-acid degradation; L-phenylalanine degradation; acetoacetate and fumarate from L-phenylalanine: step 5/6. The polypeptide is Maleylacetoacetate isomerase (maiA) (Rhizobium meliloti (strain 1021) (Ensifer meliloti)).